The chain runs to 169 residues: Small ribosomal subunit protein uS5 (169 aa).

In terms of domain architecture, S5 DRBM spans 14–77 (MKEQVVDIRR…QAAKKNLLLV (64 aa)).

Belongs to the universal ribosomal protein uS5 family. Part of the 30S ribosomal subunit. Contacts proteins S4 and S8.

Its function is as follows. With S4 and S12 plays an important role in translational accuracy. Functionally, located at the back of the 30S subunit body where it stabilizes the conformation of the head with respect to the body. This Alkaliphilus metalliredigens (strain QYMF) protein is Small ribosomal subunit protein uS5.